Consider the following 260-residue polypeptide: Ditrans,polycis-undecaprenyl-diphosphate synthase ((2E,6E)-farnesyl-diphosphate specific) (260 aa).

Aspartate 20 is a catalytic residue. Aspartate 20 lines the Mg(2+) pocket. Substrate contacts are provided by residues 21 to 24 (GNGR), tryptophan 25, arginine 33, histidine 37, and 65 to 67 (SSE). Catalysis depends on asparagine 68, which acts as the Proton acceptor. Positions 69, 71, and 188 each coordinate substrate. Residue histidine 193 participates in Mg(2+) binding. 194 to 196 (RIS) contacts substrate. Glutamate 207 serves as a coordination point for Mg(2+).

Belongs to the UPP synthase family. In terms of assembly, homodimer. It depends on Mg(2+) as a cofactor.

It catalyses the reaction 8 isopentenyl diphosphate + (2E,6E)-farnesyl diphosphate = di-trans,octa-cis-undecaprenyl diphosphate + 8 diphosphate. Functionally, catalyzes the sequential condensation of isopentenyl diphosphate (IPP) with (2E,6E)-farnesyl diphosphate (E,E-FPP) to yield (2Z,6Z,10Z,14Z,18Z,22Z,26Z,30Z,34E,38E)-undecaprenyl diphosphate (di-trans,octa-cis-UPP). UPP is the precursor of glycosyl carrier lipid in the biosynthesis of bacterial cell wall polysaccharide components such as peptidoglycan and lipopolysaccharide. The protein is Ditrans,polycis-undecaprenyl-diphosphate synthase ((2E,6E)-farnesyl-diphosphate specific) of Wigglesworthia glossinidia brevipalpis.